The sequence spans 291 residues: Putative transport permease ycf38 (291 aa).

Transmembrane regions (helical) follow at residues 47–67, 87–107, 135–155, 165–185, 195–215, and 262–282; these read ATLM…GGLF, SGII…PLMF, FMTC…LFMG, LIFA…SLAL, LLAL…ALAP, and ISLG…AYIV. The ABC transmembrane type-2 domain occupies 47 to 289; the sequence is ATLMAGIIQP…YIVSNILKAR (243 aa).

The protein belongs to the ABC-2 integral membrane protein family.

The protein resides in the plastid. It localises to the chloroplast membrane. The sequence is that of Putative transport permease ycf38 (ycf38) from Porphyra purpurea (Red seaweed).